The sequence spans 181 residues: uncharacterized protein (181 aa).

Residues 1–23 form the signal peptide; sequence MKKCLLFLTTIALILSLSTNAFA.

This is an uncharacterized protein from Bacillus subtilis (strain 168).